We begin with the raw amino-acid sequence, 256 residues long: DNA repair protein RecO (256 aa).

Belongs to the RecO family.

Involved in DNA repair and RecF pathway recombination. The chain is DNA repair protein RecO from Nocardia farcinica (strain IFM 10152).